The primary structure comprises 159 residues: MELPAVNLKVILLGHWLLTTWGCIVFSGSYAWANFTILALGVWAVAQRDSIDAISMFLGGLLATIFLDIVHISIFYPRVSLTDTGRFGVGMAILSLLLKPLSCCFVYHMYRERGGELLVHTGFLGSSQDRSAYQTIDSAEAPADPFAVPEGRSQDARGY.

Residues 1 to 23 (MELPAVNLKVILLGHWLLTTWGC) lie on the Extracellular side of the membrane. Residues 24 to 44 (IVFSGSYAWANFTILALGVWA) form a helical membrane-spanning segment. Residues 45 to 55 (VAQRDSIDAIS) lie on the Cytoplasmic side of the membrane. The helical transmembrane segment at 56–76 (MFLGGLLATIFLDIVHISIFY) threads the bilayer. Over 77 to 86 (PRVSLTDTGR) the chain is Extracellular. A helical transmembrane segment spans residues 87–107 (FGVGMAILSLLLKPLSCCFVY). Over 108–159 (HMYRERGGELLVHTGFLGSSQDRSAYQTIDSAEAPADPFAVPEGRSQDARGY) the chain is Cytoplasmic. Residues 110–122 (YRERGGELLVHTG) are interaction with AGTR1. Phosphoserine is present on residues S126 and S127. T135 is subject to Phosphothreonine. A phosphoserine mark is found at S138 and S153. Residues 140-159 (EAPADPFAVPEGRSQDARGY) form a disordered region.

As to quaternary structure, interacts with RACK1, and with the C-terminal region of AGTR1. As to expression, ubiquitous but more abundant in kidney, heart, pancreas and thyroid.

Its subcellular location is the endoplasmic reticulum membrane. It is found in the golgi apparatus membrane. It localises to the cytoplasmic vesicle membrane. In terms of biological role, appears to be a negative regulator of type-1 angiotensin II receptor-mediated signaling by regulating receptor internalization as well as mechanism of receptor desensitization such as phosphorylation. Also induces a decrease in cell proliferation and angiotensin II-stimulated transcriptional activity. The protein is Type-1 angiotensin II receptor-associated protein (AGTRAP) of Homo sapiens (Human).